The following is a 353-amino-acid chain: MSSSYSSRAEKYDLISCKDLTWDLSRSHLTTQYKSFYMCFDDGSFGYLQIAYGNLGLLVKVTPLGWTYYPAKTEKNVEPIVNSSTYLYRSMKISKDRYSVDVQKHFMHFNSSTREWHIVIEGVYDLKIKTEDSGFSLVDFGQNDSSSRMEHKIFPINTVEGTVTAHGREKKLTGVAVYVGALFFREKFTNLGHTWQNSILFDKSKKSILTCLHYFPRDPSQPFRSQASLTLDGKLIAVLLDNEYSTKGAAQVDGIRYLLPEQIHRILSGQTFDGKPVRVELSAELEELDSITDVLKIFPKWAKDIVSIWAGLPFVFVWLQHITAEVFIDNEHVATLSGCYYLEQTCVHLPQTC.

It belongs to the SVF1 family.

Its subcellular location is the cytoplasm. It is found in the nucleus. The polypeptide is Survival factor 2 (svf2) (Schizosaccharomyces pombe (strain 972 / ATCC 24843) (Fission yeast)).